The primary structure comprises 123 residues: Large ribosomal subunit protein bL12 (123 aa).

This sequence belongs to the bacterial ribosomal protein bL12 family. In terms of assembly, homodimer. Part of the ribosomal stalk of the 50S ribosomal subunit. Forms a multimeric L10(L12)X complex, where L10 forms an elongated spine to which 2 to 4 L12 dimers bind in a sequential fashion. Binds GTP-bound translation factors.

Its function is as follows. Forms part of the ribosomal stalk which helps the ribosome interact with GTP-bound translation factors. Is thus essential for accurate translation. The protein is Large ribosomal subunit protein bL12 of Maricaulis maris (strain MCS10) (Caulobacter maris).